We begin with the raw amino-acid sequence, 400 residues long: Acetate kinase (400 aa).

Asn10 lines the Mg(2+) pocket. Lys17 contributes to the ATP binding site. Residue Arg91 participates in substrate binding. Residue Asp150 is the Proton donor/acceptor of the active site. ATP is bound by residues 210 to 214 (HLGNG), 285 to 287 (DCR), and 333 to 337 (GIGEN). Glu387 lines the Mg(2+) pocket.

This sequence belongs to the acetokinase family. Homodimer. Mg(2+) serves as cofactor. The cofactor is Mn(2+).

The protein localises to the cytoplasm. The catalysed reaction is acetate + ATP = acetyl phosphate + ADP. It participates in metabolic intermediate biosynthesis; acetyl-CoA biosynthesis; acetyl-CoA from acetate: step 1/2. Its function is as follows. Catalyzes the formation of acetyl phosphate from acetate and ATP. Can also catalyze the reverse reaction. This is Acetate kinase from Erwinia tasmaniensis (strain DSM 17950 / CFBP 7177 / CIP 109463 / NCPPB 4357 / Et1/99).